Consider the following 571-residue polypeptide: Proline--tRNA ligase (571 aa).

The protein belongs to the class-II aminoacyl-tRNA synthetase family. ProS type 1 subfamily. Homodimer.

It is found in the cytoplasm. The catalysed reaction is tRNA(Pro) + L-proline + ATP = L-prolyl-tRNA(Pro) + AMP + diphosphate. Catalyzes the attachment of proline to tRNA(Pro) in a two-step reaction: proline is first activated by ATP to form Pro-AMP and then transferred to the acceptor end of tRNA(Pro). As ProRS can inadvertently accommodate and process non-cognate amino acids such as alanine and cysteine, to avoid such errors it has two additional distinct editing activities against alanine. One activity is designated as 'pretransfer' editing and involves the tRNA(Pro)-independent hydrolysis of activated Ala-AMP. The other activity is designated 'posttransfer' editing and involves deacylation of mischarged Ala-tRNA(Pro). The misacylated Cys-tRNA(Pro) is not edited by ProRS. This chain is Proline--tRNA ligase, found in Pseudomonas entomophila (strain L48).